The chain runs to 464 residues: UDP-glycosyltransferase 76C1 (464 aa).

UDP-alpha-D-glucose contacts are provided by residues S279, 338-340, 355-363, and 377-380; these read APQ, HNGWNSTLE, and KWDQ.

This sequence belongs to the UDP-glycosyltransferase family.

Its activity is regulated as follows. Inhibited by olomoucine and 3-isobutyl-1-methylxanthine. In terms of biological role, involved in the N-glucosylation of cytokinins. Catalyzes the formation of both the 7-N and the 9-N-glucosides. The chain is UDP-glycosyltransferase 76C1 (UGT76C1) from Arabidopsis thaliana (Mouse-ear cress).